A 62-amino-acid polypeptide reads, in one-letter code: Translational regulator CsrA 3 (62 aa).

It belongs to the CsrA/RsmA family. In terms of assembly, homodimer; the beta-strands of each monomer intercalate to form a hydrophobic core, while the alpha-helices form wings that extend away from the core.

The protein resides in the cytoplasm. Its function is as follows. A key translational regulator that binds mRNA to regulate translation initiation and/or mRNA stability. Mediates global changes in gene expression, shifting from rapid growth to stress survival by linking envelope stress, the stringent response and the catabolite repression systems. Usually binds in the 5'-UTR; binding at or near the Shine-Dalgarno sequence prevents ribosome-binding, repressing translation, binding elsewhere in the 5'-UTR can activate translation and/or stabilize the mRNA. Its function is antagonized by small RNA(s). The chain is Translational regulator CsrA 3 from Pseudomonas syringae pv. tomato (strain ATCC BAA-871 / DC3000).